The chain runs to 308 residues: Ribosomal RNA small subunit methyltransferase H (308 aa).

S-adenosyl-L-methionine is bound by residues 36–38, D55, F82, D103, and Q110; that span reads GGH.

The protein belongs to the methyltransferase superfamily. RsmH family.

The protein resides in the cytoplasm. The catalysed reaction is cytidine(1402) in 16S rRNA + S-adenosyl-L-methionine = N(4)-methylcytidine(1402) in 16S rRNA + S-adenosyl-L-homocysteine + H(+). Functionally, specifically methylates the N4 position of cytidine in position 1402 (C1402) of 16S rRNA. The chain is Ribosomal RNA small subunit methyltransferase H from Helicobacter pylori (strain J99 / ATCC 700824) (Campylobacter pylori J99).